The primary structure comprises 109 residues: Thiosulfate sulfurtransferase GlpE (109 aa).

The Rhodanese domain occupies 17 to 105 (AQGQALLLDI…WQRAYPEEVA (89 aa)). The Cysteine persulfide intermediate role is filled by C65.

This sequence belongs to the GlpE family.

It is found in the cytoplasm. The enzyme catalyses thiosulfate + hydrogen cyanide = thiocyanate + sulfite + 2 H(+). It carries out the reaction thiosulfate + [thioredoxin]-dithiol = [thioredoxin]-disulfide + hydrogen sulfide + sulfite + 2 H(+). Its function is as follows. Transferase that catalyzes the transfer of sulfur from thiosulfate to thiophilic acceptors such as cyanide or dithiols. May function in a CysM-independent thiosulfate assimilation pathway by catalyzing the conversion of thiosulfate to sulfite, which can then be used for L-cysteine biosynthesis. The sequence is that of Thiosulfate sulfurtransferase GlpE from Edwardsiella ictaluri (strain 93-146).